The chain runs to 111 residues: UPF0339 protein ACIAD0721 (111 aa).

A run of 2 repeats spans residues 10-58 (AKDG…RYER) and 61-109 (AKND…VKDL). Residues 89-111 (SRDKGIESVKNNGTTATVKDLTG) are disordered.

Belongs to the UPF0339 family. Duplicated subfamily.

In Acinetobacter baylyi (strain ATCC 33305 / BD413 / ADP1), this protein is UPF0339 protein ACIAD0721.